Consider the following 92-residue polypeptide: Small ribosomal subunit protein uS19c (92 aa).

Belongs to the universal ribosomal protein uS19 family.

The protein resides in the plastid. It localises to the chloroplast. Protein S19 forms a complex with S13 that binds strongly to the 16S ribosomal RNA. This is Small ribosomal subunit protein uS19c from Psilotum nudum (Whisk fern).